Reading from the N-terminus, the 306-residue chain is Pantothenate kinase (306 aa).

91 to 98 provides a ligand contact to ATP; sequence GSVAVGKS.

It belongs to the prokaryotic pantothenate kinase family.

It is found in the cytoplasm. It carries out the reaction (R)-pantothenate + ATP = (R)-4'-phosphopantothenate + ADP + H(+). It participates in cofactor biosynthesis; coenzyme A biosynthesis; CoA from (R)-pantothenate: step 1/5. This is Pantothenate kinase from Streptococcus equi subsp. equi (strain 4047).